Reading from the N-terminus, the 1374-residue chain is DNA-directed RNA polymerase subunit beta (1374 aa).

Belongs to the RNA polymerase beta chain family. As to quaternary structure, the RNAP catalytic core consists of 2 alpha, 1 beta, 1 beta' and 1 omega subunit. When a sigma factor is associated with the core the holoenzyme is formed, which can initiate transcription.

It catalyses the reaction RNA(n) + a ribonucleoside 5'-triphosphate = RNA(n+1) + diphosphate. In terms of biological role, DNA-dependent RNA polymerase catalyzes the transcription of DNA into RNA using the four ribonucleoside triphosphates as substrates. This chain is DNA-directed RNA polymerase subunit beta, found in Acidovorax sp. (strain JS42).